A 531-amino-acid chain; its full sequence is Histone-arginine methyltransferase CARMER (531 aa).

Residues 141 to 450 (ASQYFQFYGY…QSYDVTIDLH (310 aa)) enclose the SAM-dependent MTase PRMT-type domain. Gln-154, Arg-163, Gly-187, Glu-209, Glu-238, and Thr-266 together coordinate S-adenosyl-L-methionine. Arg-501 is modified (asymmetric dimethylarginine; by autocatalysis).

The protein belongs to the class I-like SAM-binding methyltransferase superfamily. Protein arginine N-methyltransferase family. Homodimer. The dimethylated protein is the major form.

It localises to the cytoplasm. Its subcellular location is the nucleus. The catalysed reaction is L-arginyl-[protein] + 2 S-adenosyl-L-methionine = N(omega),N(omega)-dimethyl-L-arginyl-[protein] + 2 S-adenosyl-L-homocysteine + 2 H(+). In terms of biological role, methylates (mono- and asymmetric dimethylation) the guanidino nitrogens of arginyl residues in proteins. May methylate histone H3 at 'Arg-17' and activate transcription via chromatin remodeling. The sequence is that of Histone-arginine methyltransferase CARMER (Art4) from Drosophila ananassae (Fruit fly).